Consider the following 237-residue polypeptide: rRNA-processing protein EFG1 (237 aa).

The interval 1-24 is disordered; it reads MPKTVKNPKNNKSRSRGAPIQVAE. Coiled coils occupy residues 53 to 113 and 166 to 186; these read DKKI…ISQT and LKIT…LMEE. The disordered stretch occupies residues 206–237; the sequence is NDKTQKAVLTEEIDAPEQKQDEQQEEQDDFFE. Residues 228 to 237 are compositionally biased toward acidic residues; sequence QQEEQDDFFE.

Belongs to the EFG1 family.

The protein resides in the nucleus. Its subcellular location is the nucleolus. In terms of biological role, involved in rRNA processing. This Candida albicans (strain SC5314 / ATCC MYA-2876) (Yeast) protein is rRNA-processing protein EFG1.